The sequence spans 129 residues: Prefoldin subunit 6 (129 aa).

Alanine 2 is subject to N-acetylalanine. Lysine 21 is modified (N6-acetyllysine). Residue lysine 66 is modified to N6-acetyllysine; alternate. Residue lysine 66 forms a Glycyl lysine isopeptide (Lys-Gly) (interchain with G-Cter in SUMO1); alternate linkage. Lysine 66 participates in a covalent cross-link: Glycyl lysine isopeptide (Lys-Gly) (interchain with G-Cter in SUMO2); alternate.

The protein belongs to the prefoldin subunit beta family. Heterohexamer of two PFD-alpha type and four PFD-beta type subunits. Component of the PAQosome complex which is responsible for the biogenesis of several protein complexes and which consists of R2TP complex members RUVBL1, RUVBL2, RPAP3 and PIH1D1, URI complex members PFDN2, PFDN6, PDRG1, UXT and URI1 as well as ASDURF, POLR2E and DNAAF10/WDR92.

In terms of biological role, binds specifically to cytosolic chaperonin (c-CPN) and transfers target proteins to it. Binds to nascent polypeptide chain and promotes folding in an environment in which there are many competing pathways for nonnative proteins. This Bos taurus (Bovine) protein is Prefoldin subunit 6 (PFDN6).